Here is a 633-residue protein sequence, read N- to C-terminus: MHGLLLAGLLALPMNVLAYPAEQHASNVLSRRGVDIESFRLPLKAKYMDSEATAQKIQAMSFSKDDDYVSTATKLVKSTFPKSTFRVVDDHYIGTNGIGHVHFKQTAHGLDIDNSDFNVNIGRDGKVFSFGNSFFTGEIPKENPMVKRAFSDPVKALKGAVKALNLPVKSDNAKPKTIAGKESFEFMGTTGALSAPKANLVYLQKEDGTLALTWKVETDVGDNWLLTYVDAHNSETVHNVVDYVASAEYKVFAWGLNDPTEGNPTSIRDPWTDASPYTWNSDGMSKYPTTRGNNAIAQDNPTGGSTYINNYRPQSPNLIFSYPWSPTATPPSSYKDFSITQLFYTTNRYHDLLYSFGFNEAAGNFQVNNGNKGGKGNDFAIVNAQDGSGTNNANFATPPDGSPGRMRMYNWTTARPNRDGCLEAGIVIHEYTHGLSNRLCGGPANSACLNALESGGMGEGWGDFYATAIRLKPRDTKNTNYSMGAWAANNPKGIRAYLYSTNLQTNPYMYTSVNSLREVHQIGTVWASMLYDLMWALIEAHGGTYSANPVFRNGVPQDGRHLSMKLVMDGMALQPCNPNFVQARDAILDADRALTNSANKCTIWKAFAKRGLGYGAKYDARNRTGSNKLPPGC.

Positions 1–18 (MHGLLLAGLLALPMNVLA) are cleaved as a signal peptide. The propeptide occupies 19–246 (YPAEQHASNV…VHNVVDYVAS (228 aa)). The N-linked (GlcNAc...) asparagine glycan is linked to Asn-410. His-429 is a Zn(2+) binding site. Glu-430 is a catalytic residue. Zn(2+) is bound at residue His-433. N-linked (GlcNAc...) asparagine glycosylation is found at Asn-480 and Asn-622.

It belongs to the peptidase M36 family. The cofactor is Zn(2+).

It is found in the secreted. In terms of biological role, secreted metalloproteinase probably acting as a virulence factor. The polypeptide is Extracellular metalloproteinase 3 (MEP3) (Trichophyton rubrum (Athlete's foot fungus)).